Consider the following 87-residue polypeptide: Small ribosomal subunit protein bS20 (87 aa).

The protein belongs to the bacterial ribosomal protein bS20 family.

Its function is as follows. Binds directly to 16S ribosomal RNA. This chain is Small ribosomal subunit protein bS20, found in Rickettsia bellii (strain OSU 85-389).